The following is a 130-amino-acid chain: Small ribosomal subunit protein uS9 (130 aa).

Belongs to the universal ribosomal protein uS9 family.

This chain is Small ribosomal subunit protein uS9, found in Magnetococcus marinus (strain ATCC BAA-1437 / JCM 17883 / MC-1).